The following is a 159-amino-acid chain: 3-dehydroquinate dehydratase (159 aa).

Tyr31 acts as the Proton acceptor in catalysis. Residues Asn82, His88, and Asp95 each coordinate substrate. The active-site Proton donor is His109. Residues 110–111 (IS) and Arg120 each bind substrate.

It belongs to the type-II 3-dehydroquinase family. As to quaternary structure, homododecamer.

It carries out the reaction 3-dehydroquinate = 3-dehydroshikimate + H2O. Its pathway is metabolic intermediate biosynthesis; chorismate biosynthesis; chorismate from D-erythrose 4-phosphate and phosphoenolpyruvate: step 3/7. Its function is as follows. Catalyzes a trans-dehydration via an enolate intermediate. This is 3-dehydroquinate dehydratase from Streptomyces avermitilis (strain ATCC 31267 / DSM 46492 / JCM 5070 / NBRC 14893 / NCIMB 12804 / NRRL 8165 / MA-4680).